We begin with the raw amino-acid sequence, 655 residues long: p-hydroxybenzoic acid efflux pump subunit AaeB (655 aa).

A run of 11 helical transmembrane segments spans residues 13–33 (FAVK…HFQL), 38–58 (WAVL…GGEP), 69–89 (LRII…ISMI), 93–113 (LLMI…SSLV), 121–141 (WGLS…EPLL), 152–172 (EIVI…PRSI), 370–390 (LFWL…IAVV), 407–427 (FIYG…VIIP), 431–451 (QSML…GIEV), 459–479 (MGAL…TFHF), and 482–502 (FLDS…VILL).

Belongs to the aromatic acid exporter ArAE (TC 2.A.85) family.

The protein resides in the cell inner membrane. Forms an efflux pump with AaeA. Could function as a metabolic relief valve, allowing to eliminate certain compounds when they accumulate to high levels in the cell. This is p-hydroxybenzoic acid efflux pump subunit AaeB from Salmonella agona (strain SL483).